A 336-amino-acid polypeptide reads, in one-letter code: Tyrosine recombinase XerC (336 aa).

One can recognise a Core-binding (CB) domain in the interval 14 to 106; it reads VARCRWLEPF…SVKSFYRFLL (93 aa). A Tyr recombinase domain is found at 127-330; that stretch reads KVPRFVSEEE…TFSRLKEIYD (204 aa). Catalysis depends on residues arginine 183, lysine 207, histidine 282, arginine 285, and histidine 308. Tyrosine 317 acts as the O-(3'-phospho-DNA)-tyrosine intermediate in catalysis.

Belongs to the 'phage' integrase family. XerC subfamily. In terms of assembly, forms a cyclic heterotetrameric complex composed of two molecules of XerC and two molecules of XerD.

The protein resides in the cytoplasm. Its function is as follows. Site-specific tyrosine recombinase, which acts by catalyzing the cutting and rejoining of the recombining DNA molecules. The XerC-XerD complex is essential to convert dimers of the bacterial chromosome into monomers to permit their segregation at cell division. It also contributes to the segregational stability of plasmids. The chain is Tyrosine recombinase XerC from Chlorobaculum parvum (strain DSM 263 / NCIMB 8327) (Chlorobium vibrioforme subsp. thiosulfatophilum).